The sequence spans 546 residues: Serine/threonine-protein kinase Chk2 (546 aa).

Residues 1–70 form a disordered region; that stretch reads MKSHHQSHSS…SSHSSSGTLS (70 aa). Residues 8-70 are compositionally biased toward low complexity; the sequence is HSSTSSKAHD…SSHSSSGTLS (63 aa). Threonine 68 is subject to Phosphothreonine; by MAP3K20. Position 71 is a phosphoserine; by PLK3 (serine 71). Threonine 77 bears the Phosphothreonine; by ATM and MAP3K20 mark. Serine 82 bears the Phosphoserine; by PLK3 mark. An FHA domain is found at 117–179; the sequence is YWFGRDKSCE…NGTFVNTELI (63 aa). Residues 224-490 form the Protein kinase domain; it reads YIMSKTLGSG…TEEALNHPWL (267 aa). Residues 231 to 238, lysine 253, and 306 to 312 each bind ATP; these read GSGACGEV and ELMEGGE. Residue aspartate 351 is the Proton acceptor of the active site. ATP is bound by residues 355–356 and aspartate 372; that span reads EN. The interval 372 to 398 is T-loop/activation segment; sequence DFGQSKILGETSLMRTLCGTPTYLAPE. Serine 383 carries the phosphoserine; by autocatalysis modification. Threonine 387 and threonine 391 each carry phosphothreonine; by autocatalysis. Serine 460 carries the phosphoserine modification.

Belongs to the protein kinase superfamily. CAMK Ser/Thr protein kinase family. CHK2 subfamily. Homodimer. Homodimerization is part of the activation process but the dimer may dissociate following activation. Interacts with PML. Interacts with TP53. Interacts with RB1; phosphorylates RB1. Interacts with BRCA1. Interacts (phosphorylated at Thr-68) with MDC1; requires ATM-mediated phosphorylation of CHEK2. Interacts with TP53BP1; modulates CHEK2 phosphorylation at Thr-68 in response to ionizing radiation. Interacts with CDC25A; phosphorylates CDC25A and mediates its degradation in response to ionizing radiation. Interacts with CUL1; mediates CHEK2 ubiquitination and regulation. Interacts with CDKN2AIP. Interacts (via protein kinase domain) with CCAR2 (via N-terminus). Interacts with SIRT1. It depends on Mg(2+) as a cofactor. Phosphorylated. Phosphorylated at Ser-82 by PLK3 in response to DNA damage, promoting phosphorylation at Thr-77 by ATM and the G2/M transition checkpoint. Phosphorylation at Thr-77 induces homodimerization. Autophosphorylates at Thr-387 and Thr-391 in the T-loop/activation segment upon dimerization to become fully active. DNA damage-induced autophosphorylation at Ser-383 induces CUL1-mediated ubiquitination and regulates the pro-apoptotic function. Phosphorylation at Ser-460 also regulates ubiquitination. Phosphorylated by PLK4. In terms of processing, ubiquitinated. CUL1-mediated ubiquitination regulates the pro-apoptotic function. Ubiquitination may also regulate protein stability. Ubiquitinated by RNF8 via 'Lys-48'-linked ubiquitination. As to expression, ubiquitously expressed with higher levels in the thymus, spleen and colon (at protein level).

It localises to the nucleus. The protein resides in the PML body. The protein localises to the nucleoplasm. The enzyme catalyses L-seryl-[protein] + ATP = O-phospho-L-seryl-[protein] + ADP + H(+). It carries out the reaction L-threonyl-[protein] + ATP = O-phospho-L-threonyl-[protein] + ADP + H(+). Its activity is regulated as follows. Activated through phosphorylation at Thr-68 by ATM in response to DNA double-strand breaks. Activation is modulated by several mediators including MDC1 and TP53BP1. Induces homodimerization with exchange of the T-loop/activation segment between protomers and transphosphorylation of the protomers. The autophosphorylated kinase dimer is fully active. Negatively regulated by PPM1D through dephosphorylation of Thr-68. Its function is as follows. Serine/threonine-protein kinase which is required for checkpoint-mediated cell cycle arrest, activation of DNA repair and apoptosis in response to the presence of DNA double-strand breaks. May also negatively regulate cell cycle progression during unperturbed cell cycles. Following activation, phosphorylates numerous effectors preferentially at the consensus sequence [L-X-R-X-X-S/T]. Regulates cell cycle checkpoint arrest through phosphorylation of CDC25A, CDC25B and CDC25C, inhibiting their activity. Inhibition of CDC25 phosphatase activity leads to increased inhibitory tyrosine phosphorylation of CDK-cyclin complexes and blocks cell cycle progression. May also phosphorylate NEK6 which is involved in G2/M cell cycle arrest. Regulates DNA repair through phosphorylation of BRCA2, enhancing the association of RAD51 with chromatin which promotes DNA repair by homologous recombination. Also stimulates the transcription of genes involved in DNA repair (including BRCA2) through the phosphorylation and activation of the transcription factor FOXM1. Regulates apoptosis through the phosphorylation of p53/TP53, MDM4 and PML. Phosphorylation of p53/TP53 at 'Ser-20' by CHEK2 may alleviate inhibition by MDM2, leading to accumulation of active p53/TP53. Phosphorylation of MDM4 may also reduce degradation of p53/TP53. Also controls the transcription of pro-apoptotic genes through phosphorylation of the transcription factor E2F1. Tumor suppressor, it may also have a DNA damage-independent function in mitotic spindle assembly by phosphorylating BRCA1. Its absence may be a cause of the chromosomal instability observed in some cancer cells. Promotes the CCAR2-SIRT1 association and is required for CCAR2-mediated SIRT1 inhibition. Under oxidative stress, promotes ATG7 ubiquitination by phosphorylating the E3 ubiquitin ligase TRIM32 at 'Ser-56' leading to positive regulation of the autophagosme assembly. This Mus musculus (Mouse) protein is Serine/threonine-protein kinase Chk2.